The following is a 263-amino-acid chain: HTH-type transcriptional repressor NanR (263 aa).

The interval 1–22 (MGLMNAFDSQTEDSSPAIGRNL) is disordered. An HTH gntR-type domain is found at 30–98 (KKLSEMVEEE…NGERARVSRP (69 aa)). A DNA-binding region (H-T-H motif) is located at residues 58-77 (ERELMAFFNVGRPSVREALA).

It belongs to the NanR family.

In terms of biological role, transcriptional repressor that controls expression of the genes required for the catabolism of sialic acids. The protein is HTH-type transcriptional repressor NanR of Escherichia coli (strain 55989 / EAEC).